Here is a 375-residue protein sequence, read N- to C-terminus: Flagellin (375 aa).

It belongs to the bacterial flagellin family.

Its subcellular location is the secreted. The protein localises to the bacterial flagellum. Flagellin is the subunit protein which polymerizes to form the filaments of bacterial flagella. Flagella are an important component in the invasiveness of B.bacilliformis. This Bartonella bacilliformis protein is Flagellin.